The primary structure comprises 572 residues: DNA polymerase (572 aa).

Residues 1–222 (MSRKMFSCDF…LPMDKEIRKA (222 aa)) form a 3'-5' exonuclease and strand displacement activities region. The interval 56 to 66 (YFHNLKFDGAF) is interaction with the primer terminal protein. 2 residues coordinate Mg(2+): aspartate 142 and aspartate 166. Residues 223–226 (YRGG) form a DNA-binding; Involved in the formation of a stable complex between TP and phi29 DNA polymerase region. Positions 227–572 (FTWLNDKYKE…VLVDSVFTIK (346 aa)) are initiation, polymerization and pyrophosphorolytic activities. Aspartate 246 and valine 247 together coordinate Mg(2+). 3 residues coordinate 5-methyl-UTP: tyrosine 251, lysine 368, and lysine 380. Residues aspartate 453 and aspartate 455 each contribute to the Mg(2+) site. Position 455 (aspartate 455) interacts with 5-methyl-UTP.

The protein belongs to the DNA polymerase type-B family. Interacts with the primer terminal protein; this interaction allows the initiation of TP-primed DNA replication at both viral DNA ends. Interacts with DNA. Requires Mg(2+) as cofactor.

It carries out the reaction DNA(n) + a 2'-deoxyribonucleoside 5'-triphosphate = DNA(n+1) + diphosphate. Its function is as follows. Polymerase responsible for protein-primed viral DNA replication by strand displacement with high processivity and fidelity. To start replication, the DNA polymerase forms a heterodimer with a free primer terminal protein (TP), recognizes the replication origins at both 5' ends of the linear chromosome, and initiates replication using as primer the OH-group of Ser-232 of the TP. This polymerase possesses three enzymatic activities: DNA synthesis (polymerase), primer terminal protein (TP) deoxynucleotidylation, which is the formation of a covalent linkage (phosphoester) between the hydroxyl group of a specific serine residue in TP and 5'-dAMP, a reaction directed by the second T at the 3' end, and 3' to 5' exonuclease activity. Exonuclease activity has a proofreading purpose. This chain is DNA polymerase (G), found in Bacillus phage M2 (Bacteriophage M2).